A 99-amino-acid chain; its full sequence is Large ribosomal subunit protein eL36A (99 aa).

The protein belongs to the eukaryotic ribosomal protein eL36 family. Component of the large ribosomal subunit (LSU). Mature yeast ribosomes consist of a small (40S) and a large (60S) subunit. The 40S small subunit contains 1 molecule of ribosomal RNA (18S rRNA) and at least 33 different proteins. The large 60S subunit contains 3 rRNA molecules (25S, 5.8S and 5S rRNA) and at least 46 different proteins.

The protein resides in the cytoplasm. Component of the ribosome, a large ribonucleoprotein complex responsible for the synthesis of proteins in the cell. The small ribosomal subunit (SSU) binds messenger RNAs (mRNAs) and translates the encoded message by selecting cognate aminoacyl-transfer RNA (tRNA) molecules. The large subunit (LSU) contains the ribosomal catalytic site termed the peptidyl transferase center (PTC), which catalyzes the formation of peptide bonds, thereby polymerizing the amino acids delivered by tRNAs into a polypeptide chain. The nascent polypeptides leave the ribosome through a tunnel in the LSU and interact with protein factors that function in enzymatic processing, targeting, and the membrane insertion of nascent chains at the exit of the ribosomal tunnel. In Schizosaccharomyces pombe (strain 972 / ATCC 24843) (Fission yeast), this protein is Large ribosomal subunit protein eL36A (rpl3601).